The sequence spans 427 residues: Fc receptor-like B (427 aa).

The signal sequence occupies residues 1 to 17 (MWMLAALLLLVPRSGKA). Ig-like C2-type domains follow at residues 23-101 (PVLT…LSVS) and 103-189 (DWLI…VAVT). Disulfide bonds link C44–C85 and C124–C168. Residue N152 is glycosylated (N-linked (GlcNAc...) asparagine). A compositionally biased stretch (polar residues) spans 401-418 (TPETPNSHVTVNPATPET). Residues 401–427 (TPETPNSHVTVNPATPETTVMEGRVDS) form a disordered region.

In terms of tissue distribution, expressed at low levels. Expressed in B-lymphocytes. Detected in spleen, lymph node, kidney, lung and brain.

It localises to the cytoplasm. The protein localises to the endoplasmic reticulum. The chain is Fc receptor-like B (Fcrlb) from Mus musculus (Mouse).